The following is a 160-amino-acid chain: SIVTKSIVNADAEARYLSPGELDRIKSFVSSGEKRLRIAQILTDNRERIVKQAGDQLFQKRPDVVSPGGNAYGQEMTATCLRDLDYYLRLITYGIVAGDVTPIEEIGIVGVREMYKSLGTPIDAVAAGVSAMKNVASSILSAEDAAEAGAYFDYVAGALA.

N4-methylasparagine is present on Asn-70. Cys-80 lines the (2R,3E)-phycocyanobilin pocket.

Belongs to the phycobiliprotein family. As to quaternary structure, component of the phycobilisome. Heterodimer of an alpha and a beta chain. Contains one covalently linked phycocyanobilin chromophore.

Its subcellular location is the cellular thylakoid membrane. Its function is as follows. Light-harvesting photosynthetic bile pigment-protein from the phycobiliprotein complex. Allophycocyanin has a maximum absorption at approximately 650 nanometers. This chain is Allophycocyanin alpha chain (apcA), found in Mastigocladus laminosus (Fischerella sp.).